The primary structure comprises 551 residues: ATP-dependent DNA helicase XPD (551 aa).

The Helicase ATP-binding domain occupies 1 to 228 (MLKLRDWQEK…KLLNQLREVV (228 aa)). Position 29–36 (29–36 (APTGSGKT)) interacts with ATP. C88, C102, C105, and C137 together coordinate [4Fe-4S] cluster. The short motif at 180–183 (DEAH) is the DEAH box element.

Belongs to the helicase family. RAD3/XPD subfamily. In terms of assembly, monomer. [4Fe-4S] cluster is required as a cofactor.

It carries out the reaction Couples ATP hydrolysis with the unwinding of duplex DNA at the replication fork by translocating in the 5'-3' direction. This creates two antiparallel DNA single strands (ssDNA). The leading ssDNA polymer is the template for DNA polymerase III holoenzyme which synthesizes a continuous strand.. The catalysed reaction is ATP + H2O = ADP + phosphate + H(+). Its function is as follows. ATP-dependent 5'-3' DNA helicase. Thought to be involved in nucleotide excision repair (NER) of DNA. The polypeptide is ATP-dependent DNA helicase XPD (Sulfolobus acidocaldarius (strain ATCC 33909 / DSM 639 / JCM 8929 / NBRC 15157 / NCIMB 11770)).